A 447-amino-acid chain; its full sequence is N-succinylarginine dihydrolase (447 aa).

Substrate is bound by residues 19–28 (AGLSFGNEAS), N110, and 137–138 (HR). E174 is a catalytic residue. R212 is a substrate binding site. H248 is a catalytic residue. The substrate site is built by D250 and N359. Catalysis depends on C365, which acts as the Nucleophile.

It belongs to the succinylarginine dihydrolase family. Homodimer.

It catalyses the reaction N(2)-succinyl-L-arginine + 2 H2O + 2 H(+) = N(2)-succinyl-L-ornithine + 2 NH4(+) + CO2. Its pathway is amino-acid degradation; L-arginine degradation via AST pathway; L-glutamate and succinate from L-arginine: step 2/5. Functionally, catalyzes the hydrolysis of N(2)-succinylarginine into N(2)-succinylornithine, ammonia and CO(2). In Salmonella arizonae (strain ATCC BAA-731 / CDC346-86 / RSK2980), this protein is N-succinylarginine dihydrolase.